The following is a 430-amino-acid chain: Tryptophan synthase beta chain (430 aa).

Lys95 bears the N6-(pyridoxal phosphate)lysine mark.

It belongs to the TrpB family. Tetramer of two alpha and two beta chains. Pyridoxal 5'-phosphate is required as a cofactor.

It carries out the reaction (1S,2R)-1-C-(indol-3-yl)glycerol 3-phosphate + L-serine = D-glyceraldehyde 3-phosphate + L-tryptophan + H2O. It participates in amino-acid biosynthesis; L-tryptophan biosynthesis; L-tryptophan from chorismate: step 5/5. In terms of biological role, the beta subunit is responsible for the synthesis of L-tryptophan from indole and L-serine. This chain is Tryptophan synthase beta chain, found in Halobacterium salinarum (strain ATCC 29341 / DSM 671 / R1).